The sequence spans 357 residues: Histidinol-phosphate aminotransferase (357 aa).

At lysine 221 the chain carries N6-(pyridoxal phosphate)lysine.

It belongs to the class-II pyridoxal-phosphate-dependent aminotransferase family. Histidinol-phosphate aminotransferase subfamily. Pyridoxal 5'-phosphate is required as a cofactor.

The catalysed reaction is L-histidinol phosphate + 2-oxoglutarate = 3-(imidazol-4-yl)-2-oxopropyl phosphate + L-glutamate. Its pathway is amino-acid biosynthesis; L-histidine biosynthesis; L-histidine from 5-phospho-alpha-D-ribose 1-diphosphate: step 7/9. This Sulfurisphaera tokodaii (strain DSM 16993 / JCM 10545 / NBRC 100140 / 7) (Sulfolobus tokodaii) protein is Histidinol-phosphate aminotransferase (hisC).